Here is a 485-residue protein sequence, read N- to C-terminus: Aspartyl/glutamyl-tRNA(Asn/Gln) amidotransferase subunit B (485 aa).

Belongs to the GatB/GatE family. GatB subfamily. As to quaternary structure, heterotrimer of A, B and C subunits.

The catalysed reaction is L-glutamyl-tRNA(Gln) + L-glutamine + ATP + H2O = L-glutaminyl-tRNA(Gln) + L-glutamate + ADP + phosphate + H(+). It catalyses the reaction L-aspartyl-tRNA(Asn) + L-glutamine + ATP + H2O = L-asparaginyl-tRNA(Asn) + L-glutamate + ADP + phosphate + 2 H(+). Allows the formation of correctly charged Asn-tRNA(Asn) or Gln-tRNA(Gln) through the transamidation of misacylated Asp-tRNA(Asn) or Glu-tRNA(Gln) in organisms which lack either or both of asparaginyl-tRNA or glutaminyl-tRNA synthetases. The reaction takes place in the presence of glutamine and ATP through an activated phospho-Asp-tRNA(Asn) or phospho-Glu-tRNA(Gln). The polypeptide is Aspartyl/glutamyl-tRNA(Asn/Gln) amidotransferase subunit B (Gluconobacter oxydans (strain 621H) (Gluconobacter suboxydans)).